We begin with the raw amino-acid sequence, 480 residues long: GTPase Obg (480 aa).

The 158-residue stretch at 2 to 159 (TRFIDRVVIH…RDLTLELKTV (158 aa)) folds into the Obg domain. The OBG-type G domain maps to 160 to 341 (ADVGLVGFPS…LTFALWDMVA (182 aa)). GTP is bound by residues 166-173 (GFPSAGKS), 191-195 (FTTLA), 212-215 (DVPG), 292-295 (NKID), and 322-324 (STV). Mg(2+) contacts are provided by Ser173 and Thr193. Residues 359-437 (PIPVDETAFS…IGDMTFDWEP (79 aa)) enclose the OCT domain. Positions 441–480 (AGVDVPLTGRGTDVRLEQTDRVGADERKAARKARRQSGDE) are disordered. Basic and acidic residues predominate over residues 452–468 (TDVRLEQTDRVGADERK). A compositionally biased stretch (basic residues) spans 469–480 (AARKARRQSGDE).

This sequence belongs to the TRAFAC class OBG-HflX-like GTPase superfamily. OBG GTPase family. As to quaternary structure, monomer. It depends on Mg(2+) as a cofactor.

Its subcellular location is the cytoplasm. Functionally, an essential GTPase which binds GTP, GDP and possibly (p)ppGpp with moderate affinity, with high nucleotide exchange rates and a fairly low GTP hydrolysis rate. Plays a role in control of the cell cycle, stress response, ribosome biogenesis and in those bacteria that undergo differentiation, in morphogenesis control. The sequence is that of GTPase Obg from Mycolicibacterium vanbaalenii (strain DSM 7251 / JCM 13017 / BCRC 16820 / KCTC 9966 / NRRL B-24157 / PYR-1) (Mycobacterium vanbaalenii).